We begin with the raw amino-acid sequence, 481 residues long: ATP synthase subunit beta (481 aa).

154–161 (GGAGVGKT) lines the ATP pocket.

Belongs to the ATPase alpha/beta chains family. F-type ATPases have 2 components, CF(1) - the catalytic core - and CF(0) - the membrane proton channel. CF(1) has five subunits: alpha(3), beta(3), gamma(1), delta(1), epsilon(1). CF(0) has three main subunits: a(1), b(2) and c(9-12). The alpha and beta chains form an alternating ring which encloses part of the gamma chain. CF(1) is attached to CF(0) by a central stalk formed by the gamma and epsilon chains, while a peripheral stalk is formed by the delta and b chains.

The protein resides in the cell inner membrane. The catalysed reaction is ATP + H2O + 4 H(+)(in) = ADP + phosphate + 5 H(+)(out). Produces ATP from ADP in the presence of a proton gradient across the membrane. The catalytic sites are hosted primarily by the beta subunits. The chain is ATP synthase subunit beta from Novosphingobium aromaticivorans (strain ATCC 700278 / DSM 12444 / CCUG 56034 / CIP 105152 / NBRC 16084 / F199).